Reading from the N-terminus, the 140-residue chain is Transmembrane protein 107 (140 aa).

The next 2 helical transmembrane spans lie at 7–27 (LVPS…TIFW) and 53–73 (LIIA…GFLS). N-linked (GlcNAc...) asparagine glycosylation is present at Asn-79. 2 consecutive transmembrane segments (helical) span residues 84-104 (LLSV…LFEG) and 113-133 (IMSF…IAVF).

The protein localises to the membrane. May play a role in cilia formation and embryonic patterning. This chain is Transmembrane protein 107 (tmem107), found in Xenopus laevis (African clawed frog).